The sequence spans 91 residues: Protein RacC (91 aa).

The chain is Protein RacC (racC) from Escherichia coli (strain K12).